A 259-amino-acid polypeptide reads, in one-letter code: Type III pantothenate kinase (259 aa).

6 to 13 is a binding site for ATP; that stretch reads DVGNTNIV. Residues Tyr100 and 107-110 each bind substrate; that span reads GADR. Asp109 acts as the Proton acceptor in catalysis. Residue Asp129 participates in K(+) binding. Thr132 is an ATP binding site. Thr184 lines the substrate pocket.

The protein belongs to the type III pantothenate kinase family. As to quaternary structure, homodimer. Requires NH4(+) as cofactor. K(+) serves as cofactor.

The protein resides in the cytoplasm. The catalysed reaction is (R)-pantothenate + ATP = (R)-4'-phosphopantothenate + ADP + H(+). It functions in the pathway cofactor biosynthesis; coenzyme A biosynthesis; CoA from (R)-pantothenate: step 1/5. Functionally, catalyzes the phosphorylation of pantothenate (Pan), the first step in CoA biosynthesis. The sequence is that of Type III pantothenate kinase from Clostridium perfringens (strain ATCC 13124 / DSM 756 / JCM 1290 / NCIMB 6125 / NCTC 8237 / Type A).